Consider the following 98-residue polypeptide: NADH-ubiquinone oxidoreductase chain 4L (98 aa).

3 helical membrane passes run 1–21, 29–49, and 58–78; these read MPLI…GMLV, SLLC…LMTL, and IMPI…LALL.

This sequence belongs to the complex I subunit 4L family. As to quaternary structure, core subunit of respiratory chain NADH dehydrogenase (Complex I) which is composed of 45 different subunits.

The protein resides in the mitochondrion inner membrane. It carries out the reaction a ubiquinone + NADH + 5 H(+)(in) = a ubiquinol + NAD(+) + 4 H(+)(out). Its function is as follows. Core subunit of the mitochondrial membrane respiratory chain NADH dehydrogenase (Complex I) which catalyzes electron transfer from NADH through the respiratory chain, using ubiquinone as an electron acceptor. Part of the enzyme membrane arm which is embedded in the lipid bilayer and involved in proton translocation. The polypeptide is NADH-ubiquinone oxidoreductase chain 4L (MT-ND4L) (Pongo abelii (Sumatran orangutan)).